The primary structure comprises 173 residues: ATP-dependent protease subunit HslV (173 aa).

T2 is an active-site residue. The Na(+) site is built by G158, D161, and S164.

The protein belongs to the peptidase T1B family. HslV subfamily. A double ring-shaped homohexamer of HslV is capped on each side by a ring-shaped HslU homohexamer. The assembly of the HslU/HslV complex is dependent on binding of ATP.

It localises to the cytoplasm. It carries out the reaction ATP-dependent cleavage of peptide bonds with broad specificity.. With respect to regulation, allosterically activated by HslU binding. In terms of biological role, protease subunit of a proteasome-like degradation complex believed to be a general protein degrading machinery. In Haemophilus ducreyi (strain 35000HP / ATCC 700724), this protein is ATP-dependent protease subunit HslV.